A 255-amino-acid chain; its full sequence is Hydroxyacylglutathione hydrolase (255 aa).

Residues H52, H54, D56, H57, H109, D126, and H166 each coordinate Zn(2+).

It belongs to the metallo-beta-lactamase superfamily. Glyoxalase II family. In terms of assembly, monomer. The cofactor is Zn(2+).

The enzyme catalyses an S-(2-hydroxyacyl)glutathione + H2O = a 2-hydroxy carboxylate + glutathione + H(+). Its pathway is secondary metabolite metabolism; methylglyoxal degradation; (R)-lactate from methylglyoxal: step 2/2. Thiolesterase that catalyzes the hydrolysis of S-D-lactoyl-glutathione to form glutathione and D-lactic acid. In Anaeromyxobacter dehalogenans (strain 2CP-C), this protein is Hydroxyacylglutathione hydrolase.